Here is a 389-residue protein sequence, read N- to C-terminus: Mannitol-1-phosphate 5-dehydrogenase (389 aa).

5–16 contributes to the NAD(+) binding site; sequence AIQFGGGNIGRG. Residue K214 is part of the active site.

The protein belongs to the mannitol dehydrogenase family. Monomer.

It carries out the reaction D-mannitol 1-phosphate + NAD(+) = beta-D-fructose 6-phosphate + NADH + H(+). In terms of biological role, catalyzes the NAD(H)-dependent interconversion of D-fructose 6-phosphate and D-mannitol 1-phosphate in the mannitol metabolic pathway. This is Mannitol-1-phosphate 5-dehydrogenase from Talaromyces marneffei (strain ATCC 18224 / CBS 334.59 / QM 7333) (Penicillium marneffei).